Reading from the N-terminus, the 235-residue chain is MTSLARLKFYATQPHACSYLPDEQATTLFLDPSQPMDVQVYAELSEMGFRRSGDHLYRPHCQRCSACIPARIPVNAPELSRQQKRILKRNADLQVRGVRPAFSEELYALYANYIEKRHADGDMYPPSREQFNTFLVRDLPFSRFYEFRLDGRLLAVAVTDVLPNGLSAVYTFYDPDEERRSLGRYAILWQMGEAARLGLKAVYLGYWIKNCRKMNYKTEYRPIELLVNQRWVTLS.

It belongs to the R-transferase family. Bpt subfamily.

It is found in the cytoplasm. The enzyme catalyses N-terminal L-glutamyl-[protein] + L-leucyl-tRNA(Leu) = N-terminal L-leucyl-L-glutamyl-[protein] + tRNA(Leu) + H(+). It carries out the reaction N-terminal L-aspartyl-[protein] + L-leucyl-tRNA(Leu) = N-terminal L-leucyl-L-aspartyl-[protein] + tRNA(Leu) + H(+). In terms of biological role, functions in the N-end rule pathway of protein degradation where it conjugates Leu from its aminoacyl-tRNA to the N-termini of proteins containing an N-terminal aspartate or glutamate. The protein is Aspartate/glutamate leucyltransferase of Stutzerimonas stutzeri (strain A1501) (Pseudomonas stutzeri).